Reading from the N-terminus, the 721-residue chain is Fatty acid oxidation complex subunit alpha (721 aa).

An enoyl-CoA hydratase/isomerase region spans residues 1–190 (MIYEGKAITV…KVGVVDAIVA (190 aa)). Position 297 (Asp297) interacts with substrate. The interval 312–721 (RDVKQAAVLG…SFFGQASSEV (410 aa)) is 3-hydroxyacyl-CoA dehydrogenase. NAD(+)-binding positions include Met325, Asp344, 401–403 (VVE), Lys408, and Ser430. His451 serves as the catalytic For 3-hydroxyacyl-CoA dehydrogenase activity. Residue Asn454 participates in NAD(+) binding. Substrate is bound by residues Asn501 and Tyr660.

In the N-terminal section; belongs to the enoyl-CoA hydratase/isomerase family. The protein in the C-terminal section; belongs to the 3-hydroxyacyl-CoA dehydrogenase family. As to quaternary structure, heterotetramer of two alpha chains (FadB) and two beta chains (FadA).

It carries out the reaction a (3S)-3-hydroxyacyl-CoA + NAD(+) = a 3-oxoacyl-CoA + NADH + H(+). The catalysed reaction is a (3S)-3-hydroxyacyl-CoA = a (2E)-enoyl-CoA + H2O. It catalyses the reaction a 4-saturated-(3S)-3-hydroxyacyl-CoA = a (3E)-enoyl-CoA + H2O. The enzyme catalyses (3S)-3-hydroxybutanoyl-CoA = (3R)-3-hydroxybutanoyl-CoA. It carries out the reaction a (3Z)-enoyl-CoA = a 4-saturated (2E)-enoyl-CoA. The catalysed reaction is a (3E)-enoyl-CoA = a 4-saturated (2E)-enoyl-CoA. Its pathway is lipid metabolism; fatty acid beta-oxidation. Its function is as follows. Involved in the aerobic and anaerobic degradation of long-chain fatty acids via beta-oxidation cycle. Catalyzes the formation of 3-oxoacyl-CoA from enoyl-CoA via L-3-hydroxyacyl-CoA. It can also use D-3-hydroxyacyl-CoA and cis-3-enoyl-CoA as substrate. The protein is Fatty acid oxidation complex subunit alpha of Pseudomonas syringae pv. tomato (strain ATCC BAA-871 / DC3000).